A 426-amino-acid polypeptide reads, in one-letter code: Enolase (426 aa).

A (2R)-2-phosphoglycerate-binding site is contributed by Q163. E205 functions as the Proton donor in the catalytic mechanism. Mg(2+)-binding residues include D242, E285, and D312. K337, R366, S367, and K388 together coordinate (2R)-2-phosphoglycerate. Catalysis depends on K337, which acts as the Proton acceptor.

This sequence belongs to the enolase family. Mg(2+) is required as a cofactor.

The protein localises to the cytoplasm. The protein resides in the secreted. It is found in the cell surface. It catalyses the reaction (2R)-2-phosphoglycerate = phosphoenolpyruvate + H2O. It participates in carbohydrate degradation; glycolysis; pyruvate from D-glyceraldehyde 3-phosphate: step 4/5. Catalyzes the reversible conversion of 2-phosphoglycerate (2-PG) into phosphoenolpyruvate (PEP). It is essential for the degradation of carbohydrates via glycolysis. The protein is Enolase of Desulfosudis oleivorans (strain DSM 6200 / JCM 39069 / Hxd3) (Desulfococcus oleovorans).